The chain runs to 406 residues: Lysophospholipid transporter LplT (406 aa).

The next 11 membrane-spanning stretches (helical) occupy residues 16 to 36 (MVAV…LLFA), 53 to 73 (ILQM…GQIA), 91 to 111 (AGAL…LVGV), 139 to 159 (MMEA…GILA), 164 to 184 (MAAL…NLFI), 227 to 247 (LFWG…PVAL), 253 to 273 (ATPT…AGAA), 285 to 305 (CLPA…QNSM), 310 to 330 (LLLI…NALL), 349 to 369 (LGEN…VKLG), and 372 to 392 (VVAV…LLWG).

This sequence belongs to the major facilitator superfamily. LplT (TC 2.A.1.42) family.

The protein localises to the cell inner membrane. Functionally, catalyzes the facilitated diffusion of 2-acyl-glycero-3-phosphoethanolamine (2-acyl-GPE) into the cell. This Yersinia pestis bv. Antiqua (strain Antiqua) protein is Lysophospholipid transporter LplT.